The sequence spans 60 residues: Large ribosomal subunit protein uL30 (60 aa).

This sequence belongs to the universal ribosomal protein uL30 family. Part of the 50S ribosomal subunit.

In Sphingopyxis alaskensis (strain DSM 13593 / LMG 18877 / RB2256) (Sphingomonas alaskensis), this protein is Large ribosomal subunit protein uL30.